We begin with the raw amino-acid sequence, 179 residues long: Lebocin-4 (179 aa).

Residues 1 to 16 (MYKFLVFSSVLVLFFA) form the signal peptide. The propeptide occupies 17-120 (QASCQRFIQP…RPIESHRNTR (104 aa)). The O-linked (GalNAc...) threonine glycan is linked to Thr135. Positions 153–179 (RRHASDDQEELRHHNEHFLIPRDILQD) are excised as a propeptide.

Belongs to the lebocin family. O-glycosylation is important for the antibacterial activity of lebocin. Hemolymph. Produced in fat body.

It is found in the secreted. Its function is as follows. Antibacterial peptide. The polypeptide is Lebocin-4 (LEB4) (Bombyx mori (Silk moth)).